We begin with the raw amino-acid sequence, 318 residues long: Transaldolase (318 aa).

Lys-132 serves as the catalytic Schiff-base intermediate with substrate.

It belongs to the transaldolase family. Type 1 subfamily. Homodimer.

The protein localises to the cytoplasm. It catalyses the reaction D-sedoheptulose 7-phosphate + D-glyceraldehyde 3-phosphate = D-erythrose 4-phosphate + beta-D-fructose 6-phosphate. The protein operates within carbohydrate degradation; pentose phosphate pathway; D-glyceraldehyde 3-phosphate and beta-D-fructose 6-phosphate from D-ribose 5-phosphate and D-xylulose 5-phosphate (non-oxidative stage): step 2/3. In terms of biological role, transaldolase is important for the balance of metabolites in the pentose-phosphate pathway. This chain is Transaldolase, found in Shewanella baltica (strain OS223).